The primary structure comprises 320 residues: Replication factor C small subunit 2 (320 aa).

44–51 (GPPGTGKT) contributes to the ATP binding site.

It belongs to the activator 1 small subunits family. RfcS subfamily. As to quaternary structure, heteromultimer composed of small subunits (RfcS) and large subunits (RfcL).

Part of the RFC clamp loader complex which loads the PCNA sliding clamp onto DNA. This chain is Replication factor C small subunit 2, found in Pyrobaculum islandicum (strain DSM 4184 / JCM 9189 / GEO3).